A 424-amino-acid polypeptide reads, in one-letter code: Dihydrolipoyllysine-residue succinyltransferase component of 2-oxoglutarate dehydrogenase complex (424 aa).

In terms of domain architecture, Lipoyl-binding spans 1–76 (MPEVKVPELA…EVGQAIAVVG (76 aa)). Lysine 42 is subject to N6-lipoyllysine. Disordered stretches follow at residues 76 to 138 (GEGS…KYAR) and 155 to 204 (VRKE…RKKT). Residues 91 to 105 (EAPKQETETSTDDKS) are compositionally biased toward basic and acidic residues. The segment covering 122–131 (DNNQRVNATP) has biased composition (polar residues). The region spanning 128–164 (NATPSARKYAREKGIDLSEIAAASNDVVRKEHVDQSQ) is the Peripheral subunit-binding (PSBD) domain. The segment covering 162-176 (QSQTQTSTQQQAQPA) has biased composition (low complexity). Catalysis depends on residues histidine 395 and aspartate 399.

Belongs to the 2-oxoacid dehydrogenase family. In terms of assembly, forms a 24-polypeptide structural core with octahedral symmetry. Part of the 2-oxoglutarate dehydrogenase (OGDH) complex composed of E1 (2-oxoglutarate dehydrogenase), E2 (dihydrolipoamide succinyltransferase) and E3 (dihydrolipoamide dehydrogenase); the complex contains multiple copies of the three enzymatic components (E1, E2 and E3). Requires (R)-lipoate as cofactor.

The catalysed reaction is N(6)-[(R)-dihydrolipoyl]-L-lysyl-[protein] + succinyl-CoA = N(6)-[(R)-S(8)-succinyldihydrolipoyl]-L-lysyl-[protein] + CoA. It participates in amino-acid degradation; L-lysine degradation via saccharopine pathway; glutaryl-CoA from L-lysine: step 6/6. In terms of biological role, E2 component of the 2-oxoglutarate dehydrogenase (OGDH) complex which catalyzes the second step in the conversion of 2-oxoglutarate to succinyl-CoA and CO(2). The polypeptide is Dihydrolipoyllysine-residue succinyltransferase component of 2-oxoglutarate dehydrogenase complex (odhB) (Staphylococcus saprophyticus subsp. saprophyticus (strain ATCC 15305 / DSM 20229 / NCIMB 8711 / NCTC 7292 / S-41)).